The chain runs to 445 residues: ATPase PAAT (445 aa).

Phosphoserine is present on residues Ser177, Ser182, Ser254, and Ser302. The disordered stretch occupies residues Pro426–Arg445. Residues Arg432 to Arg445 show a composition bias toward basic and acidic residues.

In terms of assembly, homodimer. Interacts with ABCB7, ABCB8/MITOSUR and ABCB10.

It is found in the cytoplasm. The protein resides in the mitochondrion. The enzyme catalyses ATP + H2O = ADP + phosphate + H(+). In terms of biological role, ATPase that regulates mitochondrial ABC transporters ABCB7, ABCB8/MITOSUR and ABCB10. Regulates mitochondrial ferric concentration and heme biosynthesis and plays a role in the maintenance of mitochondrial homeostasis and cell survival. The polypeptide is ATPase PAAT (Homo sapiens (Human)).